We begin with the raw amino-acid sequence, 430 residues long: Probable glucose-6-phosphate isomerase (430 aa).

The active-site Proton donor is the E271. Residues H292, H303, and K403 contribute to the active site.

The protein belongs to the GPI family.

It localises to the cytoplasm. The catalysed reaction is alpha-D-glucose 6-phosphate = beta-D-fructose 6-phosphate. It participates in carbohydrate biosynthesis; gluconeogenesis. Its pathway is carbohydrate degradation; glycolysis; D-glyceraldehyde 3-phosphate and glycerone phosphate from D-glucose: step 2/4. Its function is as follows. Catalyzes the reversible isomerization of glucose-6-phosphate to fructose-6-phosphate. The sequence is that of Probable glucose-6-phosphate isomerase from Haloquadratum walsbyi (strain DSM 16790 / HBSQ001).